We begin with the raw amino-acid sequence, 211 residues long: tRNA (guanine-N(7)-)-methyltransferase (211 aa).

S-adenosyl-L-methionine is bound by residues glutamate 44, aspartate 69, aspartate 96, and aspartate 118. Aspartate 118 is a catalytic residue. Position 122 (lysine 122) interacts with substrate. The tract at residues 124–129 (RHEKRR) is interaction with RNA. Substrate-binding positions include aspartate 154 and 191–194 (TEYE).

Belongs to the class I-like SAM-binding methyltransferase superfamily. TrmB family.

It catalyses the reaction guanosine(46) in tRNA + S-adenosyl-L-methionine = N(7)-methylguanosine(46) in tRNA + S-adenosyl-L-homocysteine. It participates in tRNA modification; N(7)-methylguanine-tRNA biosynthesis. Catalyzes the formation of N(7)-methylguanine at position 46 (m7G46) in tRNA. The polypeptide is tRNA (guanine-N(7)-)-methyltransferase (Streptococcus equi subsp. zooepidemicus (strain H70)).